The sequence spans 347 residues: Endothelin receptor type B (347 aa).

At 1 to 7 (EIKETFK) the chain is on the extracellular side. Residues 8-32 (YINTVVSCLVFVLGIIGNSTLLRII) traverse the membrane as a helical segment. Residues 33-43 (YKNKCMRNGPN) are Cytoplasmic-facing. Residues 44-69 (ILIASLALGDLLHIIIDIPISVYKLL) traverse the membrane as a helical segment. Topologically, residues 70-81 (AEDWPFGVEMCK) are extracellular. Cys-80 and Cys-161 form a disulfide bridge. The chain crosses the membrane as a helical span at residues 82 to 103 (LVPFIQKASVGITVLSLCALSI). Residues 104 to 124 (DRYRAVASWSRIKGIGVPKWT) are Cytoplasmic-facing. Residues 125 to 149 (AVEIVLIWVISVVLAVPEAIAFDMI) form a helical membrane-spanning segment. Topologically, residues 150-177 (TMEYRGKDLRICLLHPTQKTSFMMFYKQ) are extracellular. A helical membrane pass occupies residues 178 to 202 (AKDWWLFSFYFCLPLAITALFYTLM). Topologically, residues 203-230 (TCEMLRKKSGMQIALNDHLKQRREVAKT) are cytoplasmic. The chain crosses the membrane as a helical span at residues 231-256 (VFCLVLVFALCWLPLHLSRILKLTIY). At 257 to 268 (DQKDPNRCELLS) the chain is on the extracellular side. A helical transmembrane segment spans residues 269–295 (FFLVMDYIGINMASLNSCINPIALYLV). At 296–347 (SKRFQNCFKSCLCCWCQSKDLLSLEERQSCLKFKANDHGYDNFRSSNKYSSS) the chain is on the cytoplasmic side. 2 S-palmitoyl cysteine lipidation sites follow: Cys-309 and Cys-311.

The protein belongs to the G-protein coupled receptor 1 family. Endothelin receptor subfamily. EDNRB sub-subfamily.

Its subcellular location is the cell membrane. Its function is as follows. Non-specific receptor for endothelin 1, 2, and 3. Mediates its action by association with G proteins that activate a phosphatidylinositol-calcium second messenger system. The polypeptide is Endothelin receptor type B (EDNRB) (Coturnix japonica (Japanese quail)).